A 478-amino-acid polypeptide reads, in one-letter code: ATP-dependent RNA helicase DDX19A (478 aa).

The residue at position 2 (A2) is an N-acetylalanine. The N-terminal lobe stretch occupies residues 2–299 (ATDSWALAVD…DPNIIKLKRE (298 aa)). K26 is covalently cross-linked (Glycyl lysine isopeptide (Lys-Gly) (interchain with G-Cter in SUMO1); alternate). K26 participates in a covalent cross-link: Glycyl lysine isopeptide (Lys-Gly) (interchain with G-Cter in SUMO2); alternate. The disordered stretch occupies residues 31-55 (KPDTNGVIKTNATPEKTDEEEKEDR). The N-terminal helix stretch occupies residues 54–67 (DRAAQSLLNKLIRS). The short motif at 91–119 (KSFEELRLKPQLLQGVYAMGFNRPSKIQE) is the Q motif element. ATP contacts are provided by residues Q118 and 137–144 (SQSGTGKT). The Helicase ATP-binding domain occupies 124–294 (MMLAEPPQNL…QKVVPDPNII (171 aa)). A DEAD box motif is present at residues 241 to 244 (DEAD). A C-terminal lobe region spans residues 300–478 (EETLDTIKQY…DLDEIEKIAN (179 aa)). The Helicase C-terminal domain maps to 305–473 (TIKQYYVLCN…RLDTDDLDEI (169 aa)). ATP contacts are provided by R428 and R431.

The protein belongs to the DEAD box helicase family. DDX19/DBP5 subfamily.

The protein localises to the cytoplasm. It localises to the nucleus. The protein resides in the nucleoplasm. It catalyses the reaction ATP + H2O = ADP + phosphate + H(+). Functionally, ATP-dependent RNA helicase involved in mRNA export from the nucleus. Rather than unwinding RNA duplexes, DDX19 functions as a remodeler of ribonucleoprotein particles, whereby proteins bound to nuclear mRNA are dissociated and replaced by cytoplasmic mRNA binding proteins. The chain is ATP-dependent RNA helicase DDX19A (DDX19A) from Bos taurus (Bovine).